Here is a 783-residue protein sequence, read N- to C-terminus: Cadherin-5 (783 aa).

A signal peptide spans M1–A25. A propeptide spanning residues V26 to R45 is cleaved from the precursor. Cadherin domains are found at residues K44–F149, T150–F256, T257–F371, Q372–F478, and F478–T585. The Extracellular segment spans residues D46–Q599. E56 and E57 together coordinate Ca(2+). The N-linked (GlcNAc...) asparagine glycan is linked to N59. D107, E109, D141, V142, N143, D144, and N145 together coordinate Ca(2+). N-linked (GlcNAc...) asparagine glycosylation occurs at N155. Ca(2+) is bound by residues D175, D177, H184, and D229. N-linked (GlcNAc...) asparagine glycosylation is found at N361, N441, and N523. The helical transmembrane segment at A600–L620 threads the bilayer. Positions R621–V660 are required for interaction with PALS1. At R621 to Y783 the chain is on the cytoplasmic side.

Part of a complex composed of AMOTL2, MAGI1 and CDH5, within the complex AMOTL2 acts as a scaffold protein for the interaction of MAGI1 with CDH5. The complex is required for coupling actin fibers to cell junctions in endothelial cells. Within the complex AMOTL2 (via its N-terminus) interacts with CDH5. Interacts (via cadherin 5 domain) with PTPRB. Interacts with TRPC4. Interacts with KRIT1. Interacts with PARD3. Interacts with RTN4 (isoform B). Interacts with PALS1; the interaction promotes PALS1 localization to cell junctions and is required for CDH5-mediated vascular lumen formation and endothelial cell. Interacts with CTNND1/p120-catenin; the interaction controls CADH5 endocytosis. Phosphorylated on tyrosine residues by KDR/VEGFR-2. Dephosphorylated by PTPRB. Post-translationally, O-glycosylated.

It is found in the cell junction. Its subcellular location is the adherens junction. It localises to the cell membrane. The protein localises to the cytoplasm. Functionally, cadherins are calcium-dependent cell adhesion proteins. They preferentially interact with themselves in a homophilic manner in connecting cells; cadherins may thus contribute to the sorting of heterogeneous cell types. This cadherin may play a important role in endothelial cell biology through control of the cohesion and organization of the intercellular junctions. It associates with alpha-catenin forming a link to the cytoskeleton. Plays a role in coupling actin fibers to cell junctions in endothelial cells, via acting as a cell junctional complex anchor for AMOTL2 and MAGI1. Acts in concert with KRIT1 and PALS1 to establish and maintain correct endothelial cell polarity and vascular lumen. These effects are mediated by recruitment and activation of the Par polarity complex and RAP1B. Required for activation of PRKCZ and for localization of phosphorylated PRKCZ, PARD3, TIAM1 and RAP1B to the cell junction. Associates with CTNND1/p120-catenin to control CADH5 endocytosis. In Bos taurus (Bovine), this protein is Cadherin-5.